A 420-amino-acid chain; its full sequence is UDP-N-acetylglucosamine 1-carboxyvinyltransferase (420 aa).

Position 22–23 (lysine 22–asparagine 23) interacts with phosphoenolpyruvate. Arginine 92 contacts UDP-N-acetyl-alpha-D-glucosamine. Cysteine 116 acts as the Proton donor in catalysis. 2-(S-cysteinyl)pyruvic acid O-phosphothioketal is present on cysteine 116. Positions 306 and 328 each coordinate UDP-N-acetyl-alpha-D-glucosamine.

The protein belongs to the EPSP synthase family. MurA subfamily.

The protein localises to the cytoplasm. It carries out the reaction phosphoenolpyruvate + UDP-N-acetyl-alpha-D-glucosamine = UDP-N-acetyl-3-O-(1-carboxyvinyl)-alpha-D-glucosamine + phosphate. It participates in cell wall biogenesis; peptidoglycan biosynthesis. Its function is as follows. Cell wall formation. Adds enolpyruvyl to UDP-N-acetylglucosamine. This Blochmanniella floridana protein is UDP-N-acetylglucosamine 1-carboxyvinyltransferase.